Consider the following 204-residue polypeptide: Probable nicotinate-nucleotide adenylyltransferase (204 aa).

The protein belongs to the NadD family.

It carries out the reaction nicotinate beta-D-ribonucleotide + ATP + H(+) = deamido-NAD(+) + diphosphate. It participates in cofactor biosynthesis; NAD(+) biosynthesis; deamido-NAD(+) from nicotinate D-ribonucleotide: step 1/1. Functionally, catalyzes the reversible adenylation of nicotinate mononucleotide (NaMN) to nicotinic acid adenine dinucleotide (NaAD). The sequence is that of Probable nicotinate-nucleotide adenylyltransferase from Dehalococcoides mccartyi (strain ATCC BAA-2100 / JCM 16839 / KCTC 5957 / BAV1).